Reading from the N-terminus, the 241-residue chain is 3-deoxy-manno-octulosonate cytidylyltransferase (241 aa).

This sequence belongs to the KdsB family.

It is found in the cytoplasm. It catalyses the reaction 3-deoxy-alpha-D-manno-oct-2-ulosonate + CTP = CMP-3-deoxy-beta-D-manno-octulosonate + diphosphate. The protein operates within nucleotide-sugar biosynthesis; CMP-3-deoxy-D-manno-octulosonate biosynthesis; CMP-3-deoxy-D-manno-octulosonate from 3-deoxy-D-manno-octulosonate and CTP: step 1/1. Its pathway is bacterial outer membrane biogenesis; lipopolysaccharide biosynthesis. Functionally, activates KDO (a required 8-carbon sugar) for incorporation into bacterial lipopolysaccharide in Gram-negative bacteria. The chain is 3-deoxy-manno-octulosonate cytidylyltransferase from Rickettsia typhi (strain ATCC VR-144 / Wilmington).